Consider the following 396-residue polypeptide: MNEAVIDPILETAVNTGDMFCSQTIPNRCLKDTILIEVQPECADTLQCVLDDKVSRHQPLLLRNHKKLELPSEKSVTRGGFYMQQLELLVKSAPPNEYALLLIQCKDTALADEDNFFVANGVIDAGYRGVISALLYYRPGVTVILPGHLTIYLFPVKLRQSRLLPKNVLKHLDPIFKSIQVQPLSNSPSNYEKPVISEFADISTVQQGQPLHRDSAEYHIDVPLTYKHIINPKRQEDAGYDICVPYNLYLKRNEFIKIVLPIIRDWDLQHPSINAYIFGRSSKSRSGIIVCPTAWPAGEHCKFYVYNLTGDDIRIKTGDRLAQVLLIDHNTQIHLKHNVLSNIAFPYAIRGKCGIPGVQWYFTKTLDLIATPSERGTRGFGSTDKETNDVDFLLKH.

Residues 280–282 and 380–381 each bind substrate; these read RSS and FG.

It belongs to the dUTPase family. Mg(2+) serves as cofactor.

It catalyses the reaction dUTP + H2O = dUMP + diphosphate + H(+). In terms of biological role, involved in nucleotide metabolism: produces dUMP, the immediate precursor of thymidine nucleotides and decreases the intracellular concentration of dUTP to avoid uracil incorporation into viral DNA. In Homo sapiens (Human), this protein is Deoxyuridine 5'-triphosphate nucleotidohydrolase.